Here is a 354-residue protein sequence, read N- to C-terminus: Biotin synthase (354 aa).

A Radical SAM core domain is found at 41 to 265 (NEVQISRLLS…LMPHSRVRLS (225 aa)). Residues cysteine 56, cysteine 60, and cysteine 63 each coordinate [4Fe-4S] cluster. [2Fe-2S] cluster contacts are provided by cysteine 100, cysteine 131, cysteine 191, and arginine 263.

This sequence belongs to the radical SAM superfamily. Biotin synthase family. As to quaternary structure, homodimer. [4Fe-4S] cluster is required as a cofactor. Requires [2Fe-2S] cluster as cofactor.

It carries out the reaction (4R,5S)-dethiobiotin + (sulfur carrier)-SH + 2 reduced [2Fe-2S]-[ferredoxin] + 2 S-adenosyl-L-methionine = (sulfur carrier)-H + biotin + 2 5'-deoxyadenosine + 2 L-methionine + 2 oxidized [2Fe-2S]-[ferredoxin]. Its pathway is cofactor biosynthesis; biotin biosynthesis; biotin from 7,8-diaminononanoate: step 2/2. Catalyzes the conversion of dethiobiotin (DTB) to biotin by the insertion of a sulfur atom into dethiobiotin via a radical-based mechanism. The chain is Biotin synthase from Shewanella woodyi (strain ATCC 51908 / MS32).